The sequence spans 259 residues: Protein IQ-DOMAIN 10 (259 aa).

The tract at residues 18–39 (KNKSNRGNVHSETSNRVKPVES) is disordered. Residues 50-77 (EVAVIRIQKAFRAFKARKRLCSLKSARR) enclose the IQ domain. Residues 61–71 (RAFKARKRLCS) form a calmodulin-binding region. The segment at 226–259 (KPSKKPEKSSPNNVITKTSAKPDEVGNSKKPGSG) is disordered.

It belongs to the IQD family. In terms of assembly, binds to multiple calmodulin (CaM) in the presence of Ca(2+) and CaM-like proteins.

It localises to the nucleus. The protein localises to the cytoplasm. It is found in the cytoskeleton. Functionally, may be involved in cooperative interactions with calmodulins or calmodulin-like proteins. Recruits calmodulin proteins to microtubules, thus being a potential scaffold in cellular signaling and trafficking. May associate with nucleic acids and regulate gene expression at the transcriptional or post-transcriptional level. The protein is Protein IQ-DOMAIN 10 of Arabidopsis thaliana (Mouse-ear cress).